The primary structure comprises 146 residues: uncharacterized protein (146 aa).

This is an uncharacterized protein from Acidianus filamentous virus 1 (isolate United States/Yellowstone) (AFV-1).